The sequence spans 180 residues: MNNLKAHYQKTIAKELQKSFAFSSIMQVPRLEKIVINMGVGDAIRDSKFLESALNELHLISGQKPVATKAKNAISTYKLRAGQLIGCKVTLRGERMWAFLEKLIYVALPRVRDFRGLSLKSFDGRGNYTIGIKEQIIFPEIVYDDIKRIRGFDVTLVTSTNKDSEALALLRALNLPLVKG.

Belongs to the universal ribosomal protein uL5 family. As to quaternary structure, part of the 50S ribosomal subunit; part of the 5S rRNA/L5/L18/L25 subcomplex. Contacts the 5S rRNA and the P site tRNA. Forms a bridge to the 30S subunit in the 70S ribosome.

Functionally, this is one of the proteins that bind and probably mediate the attachment of the 5S RNA into the large ribosomal subunit, where it forms part of the central protuberance. In the 70S ribosome it contacts protein S13 of the 30S subunit (bridge B1b), connecting the 2 subunits; this bridge is implicated in subunit movement. Contacts the P site tRNA; the 5S rRNA and some of its associated proteins might help stabilize positioning of ribosome-bound tRNAs. This chain is Large ribosomal subunit protein uL5, found in Mycoplasma pneumoniae (strain ATCC 29342 / M129 / Subtype 1) (Mycoplasmoides pneumoniae).